Reading from the N-terminus, the 106-residue chain is A-type ATP synthase subunit F (106 aa).

It belongs to the V-ATPase F subunit family. In terms of assembly, has multiple subunits with at least A(3), B(3), C, D, E, F, H, I and proteolipid K(x).

It localises to the cell membrane. Functionally, component of the A-type ATP synthase that produces ATP from ADP in the presence of a proton gradient across the membrane. The polypeptide is A-type ATP synthase subunit F (Methanothermobacter thermautotrophicus (strain ATCC 29096 / DSM 1053 / JCM 10044 / NBRC 100330 / Delta H) (Methanobacterium thermoautotrophicum)).